Consider the following 554-residue polypeptide: Inactive sesquithujene synthase (554 aa).

Asp308 and Asp312 together coordinate Mg(2+). The substrate site is built by Asp308, Asp312, Arg449, and Asn452. The DDXXD motif motif lies at 308–312 (DDMFD). Positions 452, 456, and 460 each coordinate Mg(2+).

Belongs to the terpene synthase family. As to quaternary structure, monomer. The cofactor is Mg(2+). Mn(2+) serves as cofactor.

The protein localises to the cytoplasm. It participates in secondary metabolite biosynthesis; terpenoid biosynthesis. Functionally, non-functional sesquiterpene synthase having less than 1% of the activity found in cv. Delprim. The chain is Inactive sesquithujene synthase from Zea mays (Maize).